We begin with the raw amino-acid sequence, 204 residues long: Peptide deformylase (204 aa).

2 residues coordinate Fe cation: Cys131 and His174. Residue Glu175 is part of the active site. His178 is a Fe cation binding site.

Belongs to the polypeptide deformylase family. The cofactor is Fe(2+).

The enzyme catalyses N-terminal N-formyl-L-methionyl-[peptide] + H2O = N-terminal L-methionyl-[peptide] + formate. Removes the formyl group from the N-terminal Met of newly synthesized proteins. Requires at least a dipeptide for an efficient rate of reaction. N-terminal L-methionine is a prerequisite for activity but the enzyme has broad specificity at other positions. The protein is Peptide deformylase of Streptococcus pyogenes serotype M18 (strain MGAS8232).